Here is a 186-residue protein sequence, read N- to C-terminus: MKLIPDDNWRWYFDADQARLMLDLANGMTFRSRFSATMLTPDAFNPSDFCVEDAALFFTYQEKCLTLNIDAQAKAELVLNALVANRFLKPLMPKSWHFAALGHGEYCPQLGELVWVRLNERLEDACFMVVDTGDKASLCLLAQAELALSGKVMVLGEAIKIMHDRLCPVDEGADHAQSSLHFAHAG.

The protein belongs to the ZapC family. In terms of assembly, interacts directly with FtsZ.

Its subcellular location is the cytoplasm. Its function is as follows. Contributes to the efficiency of the cell division process by stabilizing the polymeric form of the cell division protein FtsZ. Acts by promoting interactions between FtsZ protofilaments and suppressing the GTPase activity of FtsZ. This is Cell division protein ZapC from Musicola paradisiaca (strain Ech703) (Dickeya paradisiaca).